Consider the following 557-residue polypeptide: Dihydroxy-acid dehydratase (557 aa).

D78 contacts Mg(2+). [2Fe-2S] cluster is bound at residue C119. Mg(2+)-binding residues include D120 and K121. K121 is modified (N6-carboxylysine). [2Fe-2S] cluster is bound at residue C192. E442 provides a ligand contact to Mg(2+). Catalysis depends on S468, which acts as the Proton acceptor.

The protein belongs to the IlvD/Edd family. As to quaternary structure, homodimer. [2Fe-2S] cluster is required as a cofactor. It depends on Mg(2+) as a cofactor.

It carries out the reaction (2R)-2,3-dihydroxy-3-methylbutanoate = 3-methyl-2-oxobutanoate + H2O. The catalysed reaction is (2R,3R)-2,3-dihydroxy-3-methylpentanoate = (S)-3-methyl-2-oxopentanoate + H2O. The protein operates within amino-acid biosynthesis; L-isoleucine biosynthesis; L-isoleucine from 2-oxobutanoate: step 3/4. It functions in the pathway amino-acid biosynthesis; L-valine biosynthesis; L-valine from pyruvate: step 3/4. Its function is as follows. Functions in the biosynthesis of branched-chain amino acids. Catalyzes the dehydration of (2R,3R)-2,3-dihydroxy-3-methylpentanoate (2,3-dihydroxy-3-methylvalerate) into 2-oxo-3-methylpentanoate (2-oxo-3-methylvalerate) and of (2R)-2,3-dihydroxy-3-methylbutanoate (2,3-dihydroxyisovalerate) into 2-oxo-3-methylbutanoate (2-oxoisovalerate), the penultimate precursor to L-isoleucine and L-valine, respectively. In Bacillus cereus (strain G9842), this protein is Dihydroxy-acid dehydratase.